Reading from the N-terminus, the 704-residue chain is MNSSSIQRKILVTSALPYANGPIHLGHVLEGIQTDIWVRFQKAIGNECYFFCADDTHGTPVMLAARKEKITPEQLIERVGQEHYTDLTSFGINYDNYDSTHSKANQEISKDIYLKLKEKGHISKRSIEQAYCEKDRMFLPDRFIKGTCPNCNSKNQYGDNCEVCGATYNPKDLIDSHCTLCGTPPVVKNSDHIFFKLGNFHKKTEQSNVDFDLQSWIETSEAVSESEGVKKKLKEWFDAGLQDWDISRDGPYFGFEIPSEKNKYFYVWLDAPVGYMASSKNFFEKNFPNEPNKFDSFWKDKNSEIVHFIGKDILYFHTLFWPAMLEGSGYRSPSKIHVHGFIGVNGEKMSKSRGTFIKAKTFAKFLDAEHLRFYLAAKLGPGMDDIDLSFDDFVNKVNADLVGNLINSVSRVSTTILDTLDRTLGTVSEEGLALLEEILTQPVKTGTRDDSIQNIIKTAYEQRNYAKVMREITRLGDRVNRYVNDNAPWKLIKENPEKAREIVTAVLNASRFLAIYLYPVVPKISEQIYKLLNLKGSPEFKDLDKSRILEKTKINPYEMITKRVDEKAIKVMLEENKQSEHPKKEEIPKSSNKEEGIEISIEELSKVELRVGEIVEAKPVEGADKLVNVKVDLGELGIKNVFAGIKIAYQPENLKGLKVVVVANLKPRKMKFGISEAMLLASGEGESLSLFVPHKDAKPGDRLK.

Positions 17–27 (PYANGPIHLGH) match the 'HIGH' region motif. Zn(2+) contacts are provided by C148, C151, C161, and C164. Residues 348-352 (KMSKS) carry the 'KMSKS' region motif. An ATP-binding site is contributed by K351. The tRNA-binding domain maps to 603-704 (ELSKVELRVG…KDAKPGDRLK (102 aa)).

This sequence belongs to the class-I aminoacyl-tRNA synthetase family. MetG type 1 subfamily. As to quaternary structure, homodimer. Zn(2+) serves as cofactor.

The protein resides in the cytoplasm. It catalyses the reaction tRNA(Met) + L-methionine + ATP = L-methionyl-tRNA(Met) + AMP + diphosphate. Is required not only for elongation of protein synthesis but also for the initiation of all mRNA translation through initiator tRNA(fMet) aminoacylation. In Leptospira borgpetersenii serovar Hardjo-bovis (strain L550), this protein is Methionine--tRNA ligase.